The chain runs to 297 residues: Nicotinate-nucleotide pyrophosphorylase [carboxylating] (297 aa).

The residue at position 2 (P2) is a Blocked amino end (Pro). Substrate is bound by residues R119, T152–K154, R176, K186, E215, D236, S259–N261, and V280–A282.

It belongs to the NadC/ModD family. In terms of assembly, hexamer formed by 3 homodimers. Homodimer.

The catalysed reaction is nicotinate beta-D-ribonucleotide + CO2 + diphosphate = quinolinate + 5-phospho-alpha-D-ribose 1-diphosphate + 2 H(+). Its pathway is cofactor biosynthesis; NAD(+) biosynthesis; nicotinate D-ribonucleotide from quinolinate: step 1/1. Functionally, involved in the catabolism of quinolinic acid (QA). The chain is Nicotinate-nucleotide pyrophosphorylase [carboxylating] (nadC) from Salmonella typhimurium (strain LT2 / SGSC1412 / ATCC 700720).